Here is a 267-residue protein sequence, read N- to C-terminus: Sepiapterin reductase (267 aa).

At Met-1 the chain carries N-acetylmethionine. Gly-20–Gly-26 is an NADP(+) binding site. Ser-38 is modified (phosphoserine). NADP(+) contacts are provided by residues Arg-48–Asn-49 and Asp-75–Leu-76. Substrate contacts are provided by residues Ser-163–Ile-164 and Tyr-176. Lys-180 is an NADP(+) binding site. The residue at position 201 (Ser-201) is a Phosphoserine. A substrate-binding site is contributed by Gly-205. Leu-207–Gln-212 lines the NADP(+) pocket. Ser-219 carries the phosphoserine modification. Substrate is bound at residue Asp-263.

The protein belongs to the sepiapterin reductase family. As to quaternary structure, homodimer.

It localises to the cytoplasm. It carries out the reaction L-erythro-7,8-dihydrobiopterin + NADP(+) = L-sepiapterin + NADPH + H(+). The catalysed reaction is (6R)-L-erythro-5,6,7,8-tetrahydrobiopterin + 2 NADP(+) = 6-pyruvoyl-5,6,7,8-tetrahydropterin + 2 NADPH + 2 H(+). Catalyzes the final one or two reductions in tetra-hydrobiopterin biosynthesis to form 5,6,7,8-tetrahydrobiopterin. The sequence is that of Sepiapterin reductase (SPR) from Bos taurus (Bovine).